An 881-amino-acid polypeptide reads, in one-letter code: Protein translocase subunit SecA (881 aa).

Residues glutamine 83, 101–105 (GEGKT), and aspartate 492 contribute to the ATP site.

Belongs to the SecA family.

Its subcellular location is the plastid. It localises to the chloroplast stroma. The protein localises to the chloroplast thylakoid membrane. The enzyme catalyses ATP + H2O + cellular proteinSide 1 = ADP + phosphate + cellular proteinSide 2.. Its function is as follows. Has a central role in coupling the hydrolysis of ATP to the transfer of proteins across the thylakoid membrane. The polypeptide is Protein translocase subunit SecA (Emiliania huxleyi (Coccolithophore)).